We begin with the raw amino-acid sequence, 164 residues long: Protein-export protein SecB (164 aa).

The protein belongs to the SecB family. Homotetramer, a dimer of dimers. One homotetramer interacts with 1 SecA dimer.

Its subcellular location is the cytoplasm. Its function is as follows. One of the proteins required for the normal export of preproteins out of the cell cytoplasm. It is a molecular chaperone that binds to a subset of precursor proteins, maintaining them in a translocation-competent state. It also specifically binds to its receptor SecA. In Rhodopseudomonas palustris (strain BisB18), this protein is Protein-export protein SecB.